A 324-amino-acid chain; its full sequence is D-alanine--D-alanine ligase (324 aa).

Residues 121–321 (NQYLKAFGVR…IKDVMTDIIE (201 aa)) enclose the ATP-grasp domain. 149–204 (MEKIGLPCFIKPSLGGSSFGVTKVKTKEQIQPAIVKAFEEAQEVLVEAFMEGTELT) serves as a coordination point for ATP. Residues aspartate 275, glutamate 288, and asparagine 290 each coordinate Mg(2+).

It belongs to the D-alanine--D-alanine ligase family. It depends on Mg(2+) as a cofactor. Requires Mn(2+) as cofactor.

The protein resides in the cytoplasm. The enzyme catalyses 2 D-alanine + ATP = D-alanyl-D-alanine + ADP + phosphate + H(+). The protein operates within cell wall biogenesis; peptidoglycan biosynthesis. Functionally, cell wall formation. The protein is D-alanine--D-alanine ligase of Bacteroides thetaiotaomicron (strain ATCC 29148 / DSM 2079 / JCM 5827 / CCUG 10774 / NCTC 10582 / VPI-5482 / E50).